A 708-amino-acid polypeptide reads, in one-letter code: Ubiquitin thioesterase Zranb1 (708 aa).

A RanBP2-type 1 zinc finger spans residues 3-33 (EHGIKWACEYCTYENWPSAIKCTMCRAQRPS). The Zn(2+) site is built by cysteine 10, cysteine 13, cysteine 24, and cysteine 27. A disordered region spans residues 38–73 (TEDPFKSGSSDVGRDWDPSSTEGGSSPLICPDSSAR). 2 consecutive RanBP2-type zinc fingers follow at residues 84–113 (NANKWSCHMCTYLNWPRAIRCTQCLSQRRT) and 149–178 (RTQHWTCSVCTYENWAKAKKCVVCDHPRPN). The Zn(2+) site is built by cysteine 90, cysteine 93, cysteine 104, cysteine 107, cysteine 155, cysteine 158, cysteine 169, and cysteine 172. The disordered stretch occupies residues 202–224 (RWRGGCSSGNSQRRSPPTTKRDS). Residues 209-219 (SGNSQRRSPPT) show a composition bias toward polar residues. 2 ANK repeats span residues 260–290 (KKTDWLFLNACVGVVEGDLAAIEAYKSSGGD) and 313–340 (YTLVHLAIRFQRQDMLAILLTEVSQQAA). The 161-residue stretch at 432-592 (LYALWNRTAG…RGHFSALVAM (161 aa)) folds into the OTU domain. Residue cysteine 443 is the Nucleophile of the active site. Histidine 585 (proton acceptor) is an active-site residue.

This sequence belongs to the peptidase C64 family. In terms of assembly, interacts with TRAF6. Interacts with APC.

Its subcellular location is the cytoplasm. It is found in the nucleus. The catalysed reaction is Thiol-dependent hydrolysis of ester, thioester, amide, peptide and isopeptide bonds formed by the C-terminal Gly of ubiquitin (a 76-residue protein attached to proteins as an intracellular targeting signal).. Its function is as follows. Ubiquitin thioesterase, which specifically hydrolyzes 'Lys-29'-linked and 'Lys-33'-linked diubiquitin. Also cleaves 'Lys-63'-linked chains, but with 40-fold less efficiency compared to 'Lys-29'-linked ones. Positive regulator of the Wnt signaling pathway that deubiquitinates APC protein, a negative regulator of Wnt-mediated transcription. Acts as a regulator of autophagy by mediating deubiquitination of PIK3C3/VPS34, thereby promoting autophagosome maturation. Plays a role in the regulation of cell morphology and cytoskeletal organization. Required in the stress fiber dynamics and cell migration. The protein is Ubiquitin thioesterase Zranb1 of Mus musculus (Mouse).